Consider the following 85-residue polypeptide: Small ribosomal subunit protein bS20 (85 aa).

Belongs to the bacterial ribosomal protein bS20 family.

Functionally, binds directly to 16S ribosomal RNA. The chain is Small ribosomal subunit protein bS20 from Borrelia hermsii (strain HS1 / DAH).